Here is a 146-residue protein sequence, read N- to C-terminus: Large ribosomal subunit protein uL16 (146 aa).

This sequence belongs to the universal ribosomal protein uL16 family. In terms of assembly, part of the 50S ribosomal subunit.

Its function is as follows. Binds 23S rRNA and is also seen to make contacts with the A and possibly P site tRNAs. This chain is Large ribosomal subunit protein uL16, found in Lactobacillus helveticus (strain DPC 4571).